A 233-amino-acid chain; its full sequence is Adenosylcobinamide-GDP ribazoletransferase (233 aa).

The next 7 membrane-spanning stretches (helical) occupy residues 24–44 (LWAFPLVALVSSALPTLVLYL), 46–66 (LPLSNVLAVLALYFTIGLLHL), 96–116 (IAGLFAVVMVLFLQVYSLQLV), 117–137 (PFYAIFLAELNSKLAMLLALA), 156–176 (SGQLLGGFIFYAILLVPVVVY), 184–204 (LLGLAFGGYAIKVALDNFGGI), and 209–229 (IGAIAEITRAGTLLVVAFAGA).

The protein belongs to the CobS family. Requires Mg(2+) as cofactor.

Its subcellular location is the cell membrane. It carries out the reaction alpha-ribazole + adenosylcob(III)inamide-GDP = adenosylcob(III)alamin + GMP + H(+). It catalyses the reaction alpha-ribazole 5'-phosphate + adenosylcob(III)inamide-GDP = adenosylcob(III)alamin 5'-phosphate + GMP + H(+). It participates in cofactor biosynthesis; adenosylcobalamin biosynthesis; adenosylcobalamin from cob(II)yrinate a,c-diamide: step 7/7. Joins adenosylcobinamide-GDP and alpha-ribazole to generate adenosylcobalamin (Ado-cobalamin). Also synthesizes adenosylcobalamin 5'-phosphate from adenosylcobinamide-GDP and alpha-ribazole 5'-phosphate. In Thermococcus onnurineus (strain NA1), this protein is Adenosylcobinamide-GDP ribazoletransferase.